The following is a 92-amino-acid chain: Small ribosomal subunit protein uS19 (92 aa).

This sequence belongs to the universal ribosomal protein uS19 family.

Functionally, protein S19 forms a complex with S13 that binds strongly to the 16S ribosomal RNA. This chain is Small ribosomal subunit protein uS19, found in Caulobacter vibrioides (strain ATCC 19089 / CIP 103742 / CB 15) (Caulobacter crescentus).